Reading from the N-terminus, the 96-residue chain is Co-chaperonin GroES (96 aa).

Residues 26–48 (LLPGSAQEKPSQGEVLATGNGQI) are disordered.

Belongs to the GroES chaperonin family. In terms of assembly, heptamer of 7 subunits arranged in a ring. Interacts with the chaperonin GroEL.

The protein resides in the cytoplasm. Its function is as follows. Together with the chaperonin GroEL, plays an essential role in assisting protein folding. The GroEL-GroES system forms a nano-cage that allows encapsulation of the non-native substrate proteins and provides a physical environment optimized to promote and accelerate protein folding. GroES binds to the apical surface of the GroEL ring, thereby capping the opening of the GroEL channel. This chain is Co-chaperonin GroES, found in Psychrobacter arcticus (strain DSM 17307 / VKM B-2377 / 273-4).